The chain runs to 422 residues: Enolase (422 aa).

Glutamine 162 contacts (2R)-2-phosphoglycerate. Glutamate 204 acts as the Proton donor in catalysis. The Mg(2+) site is built by aspartate 241, glutamate 284, and aspartate 311. Residues lysine 336, arginine 365, serine 366, and lysine 387 each contribute to the (2R)-2-phosphoglycerate site. The active-site Proton acceptor is the lysine 336.

The protein belongs to the enolase family. In terms of assembly, component of the RNA degradosome, a multiprotein complex involved in RNA processing and mRNA degradation. It depends on Mg(2+) as a cofactor.

It localises to the cytoplasm. The protein localises to the secreted. Its subcellular location is the cell surface. It carries out the reaction (2R)-2-phosphoglycerate = phosphoenolpyruvate + H2O. It participates in carbohydrate degradation; glycolysis; pyruvate from D-glyceraldehyde 3-phosphate: step 4/5. In terms of biological role, catalyzes the reversible conversion of 2-phosphoglycerate (2-PG) into phosphoenolpyruvate (PEP). It is essential for the degradation of carbohydrates via glycolysis. The protein is Enolase of Legionella pneumophila (strain Paris).